We begin with the raw amino-acid sequence, 119 residues long: Ribonuclease P protein component (119 aa).

This sequence belongs to the RnpA family. In terms of assembly, consists of a catalytic RNA component (M1 or rnpB) and a protein subunit.

It catalyses the reaction Endonucleolytic cleavage of RNA, removing 5'-extranucleotides from tRNA precursor.. RNaseP catalyzes the removal of the 5'-leader sequence from pre-tRNA to produce the mature 5'-terminus. It can also cleave other RNA substrates such as 4.5S RNA. The protein component plays an auxiliary but essential role in vivo by binding to the 5'-leader sequence and broadening the substrate specificity of the ribozyme. This Halalkalibacterium halodurans (strain ATCC BAA-125 / DSM 18197 / FERM 7344 / JCM 9153 / C-125) (Bacillus halodurans) protein is Ribonuclease P protein component.